Here is a 540-residue protein sequence, read N- to C-terminus: Exopolysaccharide phosphotransferase SCO6022 (540 aa).

This sequence belongs to the stealth family.

This chain is Exopolysaccharide phosphotransferase SCO6022, found in Streptomyces coelicolor (strain ATCC BAA-471 / A3(2) / M145).